The chain runs to 144 residues: Large ribosomal subunit protein uL13 (144 aa).

Belongs to the universal ribosomal protein uL13 family. Part of the 50S ribosomal subunit.

In terms of biological role, this protein is one of the early assembly proteins of the 50S ribosomal subunit, although it is not seen to bind rRNA by itself. It is important during the early stages of 50S assembly. In Mycoplasma mobile (strain ATCC 43663 / 163K / NCTC 11711) (Mesomycoplasma mobile), this protein is Large ribosomal subunit protein uL13.